We begin with the raw amino-acid sequence, 350 residues long: Peptide-N(4)-(N-acetyl-beta-glucosaminyl)asparagine amidase (350 aa).

The Zn(2+) site is built by cysteine 123, cysteine 126, cysteine 157, and cysteine 160. The active-site Nucleophile is cysteine 183. Catalysis depends on residues histidine 210 and aspartate 227. Glutamate 230 is a substrate binding site. A disordered region spans residues glutamate 324 to arginine 350. Basic and acidic residues predominate over residues aspartate 340 to arginine 350.

It belongs to the transglutaminase-like superfamily. PNGase family. The cofactor is Zn(2+).

It localises to the cytoplasm. It carries out the reaction Hydrolysis of an N(4)-(acetyl-beta-D-glucosaminyl)asparagine residue in which the glucosamine residue may be further glycosylated, to yield a (substituted) N-acetyl-beta-D-glucosaminylamine and a peptide containing an aspartate residue.. Specifically deglycosylates the denatured form of N-linked glycoproteins in the cytoplasm and assists their proteasome-mediated degradation. Cleaves the beta-aspartyl-glucosamine (GlcNAc) of the glycan and the amide side chain of Asn, converting Asn to Asp. Prefers proteins containing high-mannose over those bearing complex type oligosaccharides. Can recognize misfolded proteins in the endoplasmic reticulum that are exported to the cytosol to be destroyed and deglycosylate them, while it has no activity toward native proteins. Deglycosylation is a prerequisite for subsequent proteasome-mediated degradation of some, but not all, misfolded glycoproteins. This Eremothecium gossypii (strain ATCC 10895 / CBS 109.51 / FGSC 9923 / NRRL Y-1056) (Yeast) protein is Peptide-N(4)-(N-acetyl-beta-glucosaminyl)asparagine amidase (PNG1).